We begin with the raw amino-acid sequence, 513 residues long: uncharacterized protein (513 aa).

Disordered stretches follow at residues 72–113 (GVVP…TGQF) and 155–262 (IMGG…NPRF). Residues 82 to 106 (ANRTANPNTNSNPNPNATNAQPNPT) are compositionally biased toward low complexity. 2 stretches are compositionally biased toward polar residues: residues 164–189 (EANS…QTQG) and 210–228 (TPLN…EFQQ). Residues 229-238 (TTSPIFSSSS) show a composition bias toward low complexity. A compositionally biased stretch (pro residues) spans 239–248 (TPPPPPPRPS). The segment covering 253–262 (GESQNTNPRF) has biased composition (polar residues). An RING-type; atypical zinc finger spans residues 396–437 (CTICMEMFKINDDVIQLPCKHYFHENCIKPWLRVNGTCAICR). The tract at residues 439–513 (PVDPNSQQRN…DDFVDEEPLE (75 aa)) is disordered. Over residues 442-493 (PNSQQRNNTSTDSANGHNPSNHANPSTSTTNDQGATLRNESFNAASQSNLSS) the composition is skewed to polar residues.

This is an uncharacterized protein from Schizosaccharomyces pombe (strain 972 / ATCC 24843) (Fission yeast).